The sequence spans 215 residues: Cytochrome c biogenesis ATP-binding export protein CcmA (215 aa).

The ABC transporter domain maps to 8-215 (LQATALACER…RDLDLGQWSA (208 aa)). 40–47 (GPNGCGKT) contacts ATP.

It belongs to the ABC transporter superfamily. CcmA exporter (TC 3.A.1.107) family. In terms of assembly, the complex is composed of two ATP-binding proteins (CcmA) and two transmembrane proteins (CcmB).

It localises to the cell inner membrane. The enzyme catalyses heme b(in) + ATP + H2O = heme b(out) + ADP + phosphate + H(+). Its function is as follows. Part of the ABC transporter complex CcmAB involved in the biogenesis of c-type cytochromes; once thought to export heme, this seems not to be the case, but its exact role is uncertain. Responsible for energy coupling to the transport system. This is Cytochrome c biogenesis ATP-binding export protein CcmA from Pseudomonas syringae pv. syringae (strain B728a).